Consider the following 538-residue polypeptide: Putative cysteine ligase BshC (538 aa).

Positions 460–484 form a coiled coil; that stretch reads KINEQIELLERMLKRNVEKKHEVEL.

This sequence belongs to the BshC family.

In terms of biological role, involved in bacillithiol (BSH) biosynthesis. May catalyze the last step of the pathway, the addition of cysteine to glucosamine malate (GlcN-Mal) to generate BSH. In Bacillus cereus (strain AH820), this protein is Putative cysteine ligase BshC.